Here is a 329-residue protein sequence, read N- to C-terminus: Ketol-acid reductoisomerase (NADP(+)) (329 aa).

The KARI N-terminal Rossmann domain occupies 2–182; sequence TQLFYDTDAD…GGTRAGILET (181 aa). Residues 25-28, S51, S53, and 83-86 contribute to the NADP(+) site; these read YGSQ and DEFQ. H108 is a catalytic residue. G134 lines the NADP(+) pocket. The region spanning 183–328 is the KARI C-terminal knotted domain; that stretch reads NFKEETETDL…KGLRSMFSWL (146 aa). Positions 191, 195, 227, and 231 each coordinate Mg(2+). S252 provides a ligand contact to substrate.

Belongs to the ketol-acid reductoisomerase family. Mg(2+) is required as a cofactor.

The enzyme catalyses (2R)-2,3-dihydroxy-3-methylbutanoate + NADP(+) = (2S)-2-acetolactate + NADPH + H(+). It catalyses the reaction (2R,3R)-2,3-dihydroxy-3-methylpentanoate + NADP(+) = (S)-2-ethyl-2-hydroxy-3-oxobutanoate + NADPH + H(+). It participates in amino-acid biosynthesis; L-isoleucine biosynthesis; L-isoleucine from 2-oxobutanoate: step 2/4. It functions in the pathway amino-acid biosynthesis; L-valine biosynthesis; L-valine from pyruvate: step 2/4. In terms of biological role, involved in the biosynthesis of branched-chain amino acids (BCAA). Catalyzes an alkyl-migration followed by a ketol-acid reduction of (S)-2-acetolactate (S2AL) to yield (R)-2,3-dihydroxy-isovalerate. In the isomerase reaction, S2AL is rearranged via a Mg-dependent methyl migration to produce 3-hydroxy-3-methyl-2-ketobutyrate (HMKB). In the reductase reaction, this 2-ketoacid undergoes a metal-dependent reduction by NADPH to yield (R)-2,3-dihydroxy-isovalerate. The chain is Ketol-acid reductoisomerase (NADP(+)) from Prochlorococcus marinus (strain MIT 9312).